The chain runs to 93 residues: Em protein H5 (93 aa).

Residues 1–93 form a disordered region; that stretch reads MASGQQERSE…IDESKFKTKS (93 aa). Composition is skewed to basic and acidic residues over residues 7–19, 32–62, and 73–93; these read ERSE…REGE, EAQE…EMGR, and GGER…KTKS.

This sequence belongs to the small hydrophilic plant seed protein family.

It is thought to provide protection for the cytoplasm during the desiccation stage of embryo development. This Triticum aestivum (Wheat) protein is Em protein H5 (EMH5).